The primary structure comprises 589 residues: Protein sprouty (589 aa).

Disordered regions lie at residues 1–37, 102–194, and 239–320; these read MDRR…GVDH, RPSS…RPES, and LHLQ…MGLG. 2 stretches are compositionally biased toward low complexity: residues 104–135 and 148–162; these read SSLS…SSSS and NNSI…INNN. Polar residues predominate over residues 163-172; it reads FLSHFQSAEP. Over residues 239-272 the composition is skewed to low complexity; it reads LHLQQHQQHLQQQQQQQQQQQQQQHLQHQQNQQH. The segment covering 276–286 has biased composition (polar residues); it reads ATTTQATSVGS. In terms of domain architecture, SPR spans 380-499; it reads RCGRCRCEQC…CYGRFAGRGC (120 aa).

The protein belongs to the sprouty family. Interacts with DRK and RasGAP1 proteins of the Ras pathway. In terms of tissue distribution, in ovary, expressed from stage 7 of oogenesis in the posterior follicle cells and during stage 9 when the follicle cells migrate posteriorly over the oocyte nucleus, expression is seen in the dorsal and lateral cells and is excluded from the ventral cells. Once the migration of follicle cells is complete expressed in the dorsal-anterior corner of the egg chamber. Expressed in the embryonic tracheal system, developing eye imaginal disk, embryonic chordotonal organ precursors, midline glia and wing imaginal disk.

It is found in the cell membrane. Inhibitor of tracheal branching that restricts branch budding by antagonizing the BNL-FGF pathway (BNL: branchless, an fgf inducer of branching). Acts as an antagonist of EGFR-mediated signaling in the eye (where it is important for cell determination) midline glia, chordotonal organs, wing and ovarian follicle cells. The polypeptide is Protein sprouty (sty) (Drosophila melanogaster (Fruit fly)).